A 77-amino-acid polypeptide reads, in one-letter code: Defensin-like protein 159 (77 aa).

The N-terminal stretch at 1–27 (MAKLSCSYFLVLILVFSAFLMVERAEG) is a signal peptide. Cystine bridges form between cysteine 30/cysteine 77, cysteine 40/cysteine 59, cysteine 45/cysteine 71, and cysteine 49/cysteine 73.

Belongs to the DEFL family.

It is found in the secreted. This Arabidopsis thaliana (Mouse-ear cress) protein is Defensin-like protein 159 (LCR25).